The chain runs to 805 residues: Sucrose synthase (805 aa).

A GT-B glycosyltransferase region spans residues 275–752; that stretch reads MVFNVVILSP…GLKRIQEKYT (478 aa).

This sequence belongs to the glycosyltransferase 1 family. Plant sucrose synthase subfamily.

It carries out the reaction an NDP-alpha-D-glucose + D-fructose = a ribonucleoside 5'-diphosphate + sucrose + H(+). Sucrose-cleaving enzyme that provides UDP-glucose and fructose for various metabolic pathways. The protein is Sucrose synthase of Solanum tuberosum (Potato).